Consider the following 608-residue polypeptide: UvrABC system protein C (608 aa).

Residues 15 to 93 (HQPGVYRMYN…IKQYLPKYNV (79 aa)) enclose the GIY-YIG domain. The region spanning 203–238 (RQVIQTLVKQMESASQSLNFEKAAIIRDQIQAMRRV) is the UVR domain.

Belongs to the UvrC family. In terms of assembly, interacts with UvrB in an incision complex.

It is found in the cytoplasm. In terms of biological role, the UvrABC repair system catalyzes the recognition and processing of DNA lesions. UvrC both incises the 5' and 3' sides of the lesion. The N-terminal half is responsible for the 3' incision and the C-terminal half is responsible for the 5' incision. The chain is UvrABC system protein C from Aliivibrio fischeri (strain ATCC 700601 / ES114) (Vibrio fischeri).